Here is a 180-residue protein sequence, read N- to C-terminus: Large ribosomal subunit protein uL5 (180 aa).

This sequence belongs to the universal ribosomal protein uL5 family. In terms of assembly, part of the 50S ribosomal subunit; part of the 5S rRNA/L5/L18/L25 subcomplex. Contacts the 5S rRNA and the P site tRNA. Forms a bridge to the 30S subunit in the 70S ribosome.

This is one of the proteins that bind and probably mediate the attachment of the 5S RNA into the large ribosomal subunit, where it forms part of the central protuberance. In the 70S ribosome it contacts protein S13 of the 30S subunit (bridge B1b), connecting the 2 subunits; this bridge is implicated in subunit movement. Contacts the P site tRNA; the 5S rRNA and some of its associated proteins might help stabilize positioning of ribosome-bound tRNAs. The chain is Large ribosomal subunit protein uL5 from Symbiobacterium thermophilum (strain DSM 24528 / JCM 14929 / IAM 14863 / T).